Consider the following 479-residue polypeptide: Aspartyl/glutamyl-tRNA(Asn/Gln) amidotransferase subunit B (479 aa).

It belongs to the GatB/GatE family. GatB subfamily. Heterotrimer of A, B and C subunits.

The catalysed reaction is L-glutamyl-tRNA(Gln) + L-glutamine + ATP + H2O = L-glutaminyl-tRNA(Gln) + L-glutamate + ADP + phosphate + H(+). It carries out the reaction L-aspartyl-tRNA(Asn) + L-glutamine + ATP + H2O = L-asparaginyl-tRNA(Asn) + L-glutamate + ADP + phosphate + 2 H(+). Allows the formation of correctly charged Asn-tRNA(Asn) or Gln-tRNA(Gln) through the transamidation of misacylated Asp-tRNA(Asn) or Glu-tRNA(Gln) in organisms which lack either or both of asparaginyl-tRNA or glutaminyl-tRNA synthetases. The reaction takes place in the presence of glutamine and ATP through an activated phospho-Asp-tRNA(Asn) or phospho-Glu-tRNA(Gln). The sequence is that of Aspartyl/glutamyl-tRNA(Asn/Gln) amidotransferase subunit B from Geotalea uraniireducens (strain Rf4) (Geobacter uraniireducens).